Reading from the N-terminus, the 100-residue chain is Urease subunit gamma (100 aa).

It belongs to the urease gamma subunit family. Heterotrimer of UreA (gamma), UreB (beta) and UreC (alpha) subunits. Three heterotrimers associate to form the active enzyme.

Its subcellular location is the cytoplasm. The catalysed reaction is urea + 2 H2O + H(+) = hydrogencarbonate + 2 NH4(+). The protein operates within nitrogen metabolism; urea degradation; CO(2) and NH(3) from urea (urease route): step 1/1. This is Urease subunit gamma from Corynebacterium glutamicum (strain R).